A 1040-amino-acid chain; its full sequence is DIS3-like exonuclease 1 (1040 aa).

One can recognise a CSD1 domain in the interval 232 to 310; the sequence is AGIKSGRYKQ…KGRTGALCEN (79 aa). Residues 360-426 form the CSD2 domain; the sequence is VLVMPWDYRI…AEIATILVEN (67 aa). The RNB domain occupies 459-808; it reads RLDLRETHLV…VHRLLLAAVN (350 aa).

The protein belongs to the RNR ribonuclease family. In terms of assembly, component of the RNA exosome complex. Mg(2+) serves as cofactor.

The protein localises to the cytoplasm. The catalysed reaction is Exonucleolytic cleavage in the 3'- to 5'-direction to yield nucleoside 5'-phosphates.. Catalytic component of the RNA exosome complex which has 3'-&gt;5' exoribonuclease activity and participates in a multitude of cellular RNA processing and degradation events. This Xenopus laevis (African clawed frog) protein is DIS3-like exonuclease 1 (dis3l).